The sequence spans 1235 residues: ATP-dependent DNA helicase mph1 (1235 aa).

Disordered stretches follow at residues 20–78 (LTQA…YRIH) and 96–148 (DEMP…VHSP). Positions 61–72 (SRSDNDEADEKK) are enriched in basic and acidic residues. A compositionally biased stretch (polar residues) spans 137 to 148 (AKTQKQNIVHSP). Residues 272-440 (IVHKGLFNNL…EVIDNLEIAE (169 aa)) enclose the Helicase ATP-binding domain. 285-292 (LPTGLGKT) serves as a coordination point for ATP. The DEAH box motif lies at 388–391 (DEAH). The Helicase C-terminal domain occupies 608 to 784 (KLTYLCDTVL…GSRFTFRHDL (177 aa)). 3 disordered regions span residues 808–827 (NTQD…RKKL), 944–1117 (SRLQ…PPLM), and 1144–1235 (TGAK…DSDE). Residues 947 to 958 (QRPEDRDNKPYG) show a composition bias toward basic and acidic residues. Positions 1015 to 1027 (VAPKKAKPRRGRA) are enriched in basic residues. The span at 1065–1074 (PGERVDRTSD) shows a compositional bias: basic and acidic residues. A compositionally biased stretch (acidic residues) spans 1075 to 1085 (MEELEADDDSD). Polar residues-rich tracts occupy residues 1095-1114 (PTQT…SSSP) and 1146-1159 (AKNS…MTQE). Residues 1160 to 1170 (SSDGGDSMDSD) are compositionally biased toward low complexity. The span at 1194 to 1209 (PSSSVFSSGQKATPNM) shows a compositional bias: polar residues.

Belongs to the DEAD box helicase family. DEAH subfamily. FANCM sub-subfamily. In terms of assembly, interacts with the MHF histone-fold complex to form the FANCM-MHF complex.

Its subcellular location is the nucleus. The catalysed reaction is ATP + H2O = ADP + phosphate + H(+). ATP-dependent DNA helicase involved in DNA damage repair by homologous recombination and in genome maintenance. Capable of unwinding D-loops. Plays a role in limiting crossover recombinants during mitotic DNA double-strand break (DSB) repair. Component of a FANCM-MHF complex which promotes gene conversion at blocked replication forks, probably by reversal of the stalled fork. The protein is ATP-dependent DNA helicase mph1 of Sclerotinia sclerotiorum (strain ATCC 18683 / 1980 / Ss-1) (White mold).